The primary structure comprises 524 residues: MLKDIHQHRILILDFGSQYAQLIARRVREIGVYCELMPCDIDEETIRDFNPHGIILSGGPETVTLSHTLRAPAFIFEIGCPVLGICYGMQTMAYQLGGKVNRTAKAEFGHAQLRVLNPAFLFDGIEDQVSPQGEPLLDVWMSHGDIVSELPPGFEATACTDNSPLAAMADFKRRFFGLQFHPEVTHTPQGHRILAHFVIHICQCIPNWTTKHIIEDSIRDIQEKVGKEQVIVGLSGGVDSAVTATLVRKAIGDQLVCVLVDTGLLRLNEVDEVLNVFQKHLGAKVICVDAKDRFMKALKGISDPEEKRKIAGEQFIRVFEEQAKKLNVKWLGQGTIYPDVIESAKTKTGKGHIIKTHHNVGGLPLNMELKLIEPLRELFKDEVRKLGLELGLPADLIYRHPFPGPGLAIRILGEVNAEYINILKQADAIFIEELKKSDYYHQVSQAFAVFMPLKSVGVKGDARHYGYIIALRAVKTVDFMTAQWADLPHEFLSKVSHRIVNEIKEVSRVVYDMTNKPPATIEWE.

Residues 9–207 (RILILDFGSQ…VIHICQCIPN (199 aa)) enclose the Glutamine amidotransferase type-1 domain. Catalysis depends on Cys-86, which acts as the Nucleophile. Residues His-181 and Glu-183 contribute to the active site. The 192-residue stretch at 208 to 399 (WTTKHIIEDS…LGLPADLIYR (192 aa)) folds into the GMPS ATP-PPase domain. Residue 235–241 (SGGVDSA) participates in ATP binding.

In terms of assembly, homodimer.

The enzyme catalyses XMP + L-glutamine + ATP + H2O = GMP + L-glutamate + AMP + diphosphate + 2 H(+). It functions in the pathway purine metabolism; GMP biosynthesis; GMP from XMP (L-Gln route): step 1/1. In terms of biological role, catalyzes the synthesis of GMP from XMP. This Coxiella burnetii (strain CbuK_Q154) (Coxiella burnetii (strain Q154)) protein is GMP synthase [glutamine-hydrolyzing].